The chain runs to 556 residues: Dihydroxy-acid dehydratase (556 aa).

Mg(2+) is bound at residue D78. C119 serves as a coordination point for [2Fe-2S] cluster. Residues D120 and K121 each contribute to the Mg(2+) site. K121 carries the N6-carboxylysine modification. C191 contacts [2Fe-2S] cluster. E442 contacts Mg(2+). S468 (proton acceptor) is an active-site residue.

It belongs to the IlvD/Edd family. In terms of assembly, homodimer. [2Fe-2S] cluster serves as cofactor. It depends on Mg(2+) as a cofactor.

It carries out the reaction (2R)-2,3-dihydroxy-3-methylbutanoate = 3-methyl-2-oxobutanoate + H2O. The enzyme catalyses (2R,3R)-2,3-dihydroxy-3-methylpentanoate = (S)-3-methyl-2-oxopentanoate + H2O. The protein operates within amino-acid biosynthesis; L-isoleucine biosynthesis; L-isoleucine from 2-oxobutanoate: step 3/4. It participates in amino-acid biosynthesis; L-valine biosynthesis; L-valine from pyruvate: step 3/4. Functionally, functions in the biosynthesis of branched-chain amino acids. Catalyzes the dehydration of (2R,3R)-2,3-dihydroxy-3-methylpentanoate (2,3-dihydroxy-3-methylvalerate) into 2-oxo-3-methylpentanoate (2-oxo-3-methylvalerate) and of (2R)-2,3-dihydroxy-3-methylbutanoate (2,3-dihydroxyisovalerate) into 2-oxo-3-methylbutanoate (2-oxoisovalerate), the penultimate precursor to L-isoleucine and L-valine, respectively. The protein is Dihydroxy-acid dehydratase of Clostridium kluyveri (strain NBRC 12016).